Consider the following 460-residue polypeptide: UDP-N-acetylmuramate--L-alanine ligase (460 aa).

Residue 119-125 (GSHGKTT) coordinates ATP.

It belongs to the MurCDEF family.

It localises to the cytoplasm. It carries out the reaction UDP-N-acetyl-alpha-D-muramate + L-alanine + ATP = UDP-N-acetyl-alpha-D-muramoyl-L-alanine + ADP + phosphate + H(+). It functions in the pathway cell wall biogenesis; peptidoglycan biosynthesis. Cell wall formation. This is UDP-N-acetylmuramate--L-alanine ligase from Alkaliphilus metalliredigens (strain QYMF).